The chain runs to 163 residues: Xanthine-guanine phosphoribosyltransferase (163 aa).

5-phospho-alpha-D-ribose 1-diphosphate contacts are provided by residues 43 to 44 (RG) and 95 to 103 (DDLVDTGGT). Asp-96 contributes to the Mg(2+) binding site. Residues Asp-99 and Ile-142 each contribute to the guanine site. Asp-99 and Ile-142 together coordinate xanthine. GMP contacts are provided by residues 99-103 (DTGGT) and 141-142 (WI).

The protein belongs to the purine/pyrimidine phosphoribosyltransferase family. XGPT subfamily. As to quaternary structure, homotetramer. Mg(2+) serves as cofactor.

The protein resides in the cell inner membrane. It catalyses the reaction GMP + diphosphate = guanine + 5-phospho-alpha-D-ribose 1-diphosphate. It carries out the reaction XMP + diphosphate = xanthine + 5-phospho-alpha-D-ribose 1-diphosphate. The catalysed reaction is IMP + diphosphate = hypoxanthine + 5-phospho-alpha-D-ribose 1-diphosphate. It participates in purine metabolism; GMP biosynthesis via salvage pathway; GMP from guanine: step 1/1. Its pathway is purine metabolism; XMP biosynthesis via salvage pathway; XMP from xanthine: step 1/1. Purine salvage pathway enzyme that catalyzes the transfer of the ribosyl-5-phosphate group from 5-phospho-alpha-D-ribose 1-diphosphate (PRPP) to the N9 position of the 6-oxopurines guanine and xanthine to form the corresponding ribonucleotides GMP (guanosine 5'-monophosphate) and XMP (xanthosine 5'-monophosphate), with the release of PPi. To a lesser extent, also acts on hypoxanthine. This is Xanthine-guanine phosphoribosyltransferase from Nitratidesulfovibrio vulgaris (strain DP4) (Desulfovibrio vulgaris).